The following is a 123-amino-acid chain: Small ribosomal subunit protein uS12cz/uS12cy (123 aa).

This sequence belongs to the universal ribosomal protein uS12 family. In terms of assembly, part of the 30S ribosomal subunit.

It localises to the plastid. Its subcellular location is the chloroplast. Its function is as follows. With S4 and S5 plays an important role in translational accuracy. Located at the interface of the 30S and 50S subunits. The polypeptide is Small ribosomal subunit protein uS12cz/uS12cy (rps12-A) (Psilotum nudum (Whisk fern)).